A 90-amino-acid chain; its full sequence is Acylphosphatase (90 aa).

Positions 3–90 constitute an Acylphosphatase-like domain; that stretch reads HYHAIITGRV…AHYQDFRIKG (88 aa). Active-site residues include Arg18 and Asn36.

This sequence belongs to the acylphosphatase family.

The enzyme catalyses an acyl phosphate + H2O = a carboxylate + phosphate + H(+). The polypeptide is Acylphosphatase (acyP) (Bacillus pumilus (strain SAFR-032)).